A 279-amino-acid chain; its full sequence is Putative pyruvate, phosphate dikinase regulatory protein (279 aa).

154-161 contributes to the ADP binding site; that stretch reads GVSRTSKT.

The protein belongs to the pyruvate, phosphate/water dikinase regulatory protein family. PDRP subfamily.

It carries out the reaction N(tele)-phospho-L-histidyl/L-threonyl-[pyruvate, phosphate dikinase] + ADP = N(tele)-phospho-L-histidyl/O-phospho-L-threonyl-[pyruvate, phosphate dikinase] + AMP + H(+). It catalyses the reaction N(tele)-phospho-L-histidyl/O-phospho-L-threonyl-[pyruvate, phosphate dikinase] + phosphate + H(+) = N(tele)-phospho-L-histidyl/L-threonyl-[pyruvate, phosphate dikinase] + diphosphate. Functionally, bifunctional serine/threonine kinase and phosphorylase involved in the regulation of the pyruvate, phosphate dikinase (PPDK) by catalyzing its phosphorylation/dephosphorylation. The protein is Putative pyruvate, phosphate dikinase regulatory protein of Rhodopseudomonas palustris (strain BisB18).